Reading from the N-terminus, the 346-residue chain is Uroporphyrinogen decarboxylase (346 aa).

Residues 23 to 27, D73, Y151, S206, and H321 contribute to the substrate site; that span reads RQAGR.

This sequence belongs to the uroporphyrinogen decarboxylase family. Homodimer.

It localises to the cytoplasm. The catalysed reaction is uroporphyrinogen III + 4 H(+) = coproporphyrinogen III + 4 CO2. Its pathway is porphyrin-containing compound metabolism; protoporphyrin-IX biosynthesis; coproporphyrinogen-III from 5-aminolevulinate: step 4/4. Catalyzes the decarboxylation of four acetate groups of uroporphyrinogen-III to yield coproporphyrinogen-III. This Aliarcobacter butzleri (strain RM4018) (Arcobacter butzleri) protein is Uroporphyrinogen decarboxylase.